Here is an 838-residue protein sequence, read N- to C-terminus: DNA gyrase subunit A (838 aa).

Threonine 2 is modified (N-acetylthreonine). Residues 41–510 (LPEVRDGLKP…ADGDVSDEDL (470 aa)) form the Topo IIA-type catalytic domain. The O-(5'-phospho-DNA)-tyrosine intermediate role is filled by tyrosine 129. Ca(2+) is bound by residues aspartate 504, serine 506, glutamate 508, and aspartate 515. One can recognise an EF-hand domain in the interval 504–516 (DVSDEDLIAREDV). Residues 514 to 838 (EDVVVTITET…DANGADQTGN (325 aa)) are C-terminal domain CTD. The GyrA-box signature appears at 537–543 (QKRGGKG). Residues 743 to 749 (QGRGGKG) carry the GyrA-box-1 motif.

Belongs to the type II topoisomerase GyrA/ParC subunit family. Heterotetramer, composed of two GyrA and two GyrB chains. In the heterotetramer, GyrA contains the active site tyrosine that forms a transient covalent intermediate with DNA, while GyrB binds cofactors and catalyzes ATP hydrolysis. The cofactor is Ca(2+).

The protein localises to the cytoplasm. It carries out the reaction ATP-dependent breakage, passage and rejoining of double-stranded DNA.. With respect to regulation, DNA supercoiling inhibited by (fluoro)quinoline antibiotics such as sparfloxacin and levofloxacin, which usually act on GyrA. DNA supercoiling inhibited by the coumarin antibiotic novobiocin which acts on GyrB. Quinolones lead to gyrase-mediated dsDNA cleavage while preventing reclosure. DNA supercoiling activity inhibited by aminopyrazinamide and pyrrolamide derivatives, probably via effects on the GyrB subunit. DNA relaxation inhibited by ATP and its analogs. DNA supercoiling, relaxation, decatenation and quinolone-promoted DNA cleavage are inhibited by MfpA (50% inhibition occurs at 2 uM), inhibition of gyrase activities is enhanced in a concentration-dependent manner by MfpA. Its function is as follows. A type II topoisomerase that negatively supercoils closed circular double-stranded (ds) DNA in an ATP-dependent manner to maintain chromosomes in an underwound state, while in the absence of ATP it relaxes supercoiled dsDNA. Also catalyzes the interconversion of other topological isomers of dsDNA rings, including catenanes. Gyrase from M.tuberculosis has higher decatenation than supercoiling activity compared to E.coli; as M.tuberculosis only has 1 type II topoisomerase, gyrase has to fulfill the decatenation function of topoisomerase IV as well. At comparable concentrations M.tuberculosis gyrase cannot introduce as many negative supercoils into DNA as the E.coli enzyme, and its ATPase activity is lower, perhaps because it does not couple DNA wrapping and ATP binding as well as E.coli. Negative supercoiling favors strand separation, and DNA replication, transcription, recombination and repair, all of which involve strand separation. Type II topoisomerases break and join 2 DNA strands simultaneously in an ATP-dependent manner. The sequence is that of DNA gyrase subunit A from Mycobacterium tuberculosis (strain ATCC 25618 / H37Rv).